The sequence spans 233 residues: ATP-dependent Clp protease proteolytic subunit 2 (233 aa).

The active-site Nucleophile is the Ser-116. Residue His-141 is part of the active site. The segment at 214–233 (EGLKSIQPNGEAADDSEDDA) is disordered.

This sequence belongs to the peptidase S14 family. Fourteen ClpP subunits assemble into 2 heptameric rings which stack back to back to give a disk-like structure with a central cavity, resembling the structure of eukaryotic proteasomes.

The protein localises to the cytoplasm. It catalyses the reaction Hydrolysis of proteins to small peptides in the presence of ATP and magnesium. alpha-casein is the usual test substrate. In the absence of ATP, only oligopeptides shorter than five residues are hydrolyzed (such as succinyl-Leu-Tyr-|-NHMec, and Leu-Tyr-Leu-|-Tyr-Trp, in which cleavage of the -Tyr-|-Leu- and -Tyr-|-Trp bonds also occurs).. Its function is as follows. Cleaves peptides in various proteins in a process that requires ATP hydrolysis. Has a chymotrypsin-like activity. Plays a major role in the degradation of misfolded proteins. In Salinibacter ruber (strain DSM 13855 / M31), this protein is ATP-dependent Clp protease proteolytic subunit 2.